Consider the following 283-residue polypeptide: Pantothenate synthetase (283 aa).

30-37 (MGALHRGH) contacts ATP. H37 serves as the catalytic Proton donor. Residue Q61 coordinates (R)-pantoate. A beta-alanine-binding site is contributed by Q61. 147 to 150 (GQKD) contributes to the ATP binding site. Position 153 (Q153) interacts with (R)-pantoate. Residues I176 and 184-187 (MSSR) each bind ATP.

This sequence belongs to the pantothenate synthetase family. As to quaternary structure, homodimer.

It is found in the cytoplasm. It catalyses the reaction (R)-pantoate + beta-alanine + ATP = (R)-pantothenate + AMP + diphosphate + H(+). It participates in cofactor biosynthesis; (R)-pantothenate biosynthesis; (R)-pantothenate from (R)-pantoate and beta-alanine: step 1/1. Its function is as follows. Catalyzes the condensation of pantoate with beta-alanine in an ATP-dependent reaction via a pantoyl-adenylate intermediate. The sequence is that of Pantothenate synthetase from Cytophaga hutchinsonii (strain ATCC 33406 / DSM 1761 / CIP 103989 / NBRC 15051 / NCIMB 9469 / D465).